The chain runs to 268 residues: Tryptophan synthase alpha chain (268 aa).

Residues Glu-49 and Asp-60 each act as proton acceptor in the active site.

Belongs to the TrpA family. In terms of assembly, tetramer of two alpha and two beta chains.

The catalysed reaction is (1S,2R)-1-C-(indol-3-yl)glycerol 3-phosphate + L-serine = D-glyceraldehyde 3-phosphate + L-tryptophan + H2O. It functions in the pathway amino-acid biosynthesis; L-tryptophan biosynthesis; L-tryptophan from chorismate: step 5/5. Functionally, the alpha subunit is responsible for the aldol cleavage of indoleglycerol phosphate to indole and glyceraldehyde 3-phosphate. This Yersinia pseudotuberculosis serotype O:1b (strain IP 31758) protein is Tryptophan synthase alpha chain.